Here is a 237-residue protein sequence, read N- to C-terminus: MVAQGFTVDLKKPLVFQVGHLGEDYEEWVHQPIATKEGPRFFQSDFWEFLTLTVWWAVPVIWLPVVVWCISRSVSMGCSLPEIVPIVVMGIFIWTFFEYVLHRFVFHIKTKSYWGNTAHYLIHGCHHKHPMDHLRLVFPPTATAILCFPFWNIAKAISTPSTAPALFGGGMLGYVMYDVTHYYLHHAQPTRPVTKNLKKYHLNHHFRIQDKGFGITSSLWDIVFGTLPTTKAPRKEQ.

2 helical membrane-spanning segments follow: residues 50–70 and 80–100; these read LTLTVWWAVPVIWLPVVVWCI and LPEIVPIVVMGIFIWTFFEYV. Zn(2+)-binding residues include H102, H107, H123, H126, and H127. 2 consecutive transmembrane segments (helical) span residues 137 to 157 and 164 to 184; these read VFPPTATAILCFPFWNIAKAI and PALFGGGMLGYVMYDVTHYYL. Residues H181, H185, H201, H204, and H205 each coordinate Zn(2+).

The protein belongs to the sterol desaturase family. In terms of assembly, interacts with CYTB5-A, CYTB5-B, CYTB5-C and CYTB5-D. Interacts indirectly with BI-1 via CYTB5-D. Zn(2+) is required as a cofactor. As to expression, expressed in leaves, roots, flowers and seeds.

It is found in the endoplasmic reticulum membrane. It catalyses the reaction an N-(1,2-saturated acyl)sphinganine + 2 Fe(II)-[cytochrome b5] + O2 + 2 H(+) = an N-[(2'R)-hydroxyacyl]sphinganine + 2 Fe(III)-[cytochrome b5] + H2O. In terms of biological role, fatty acid 2-hydroxylase involved in the alpha-hydroxylation of sphingolipid-associated very long-chain fatty acids (VLCFA). Probably involved in the resistance response to oxidative stress. In Arabidopsis thaliana (Mouse-ear cress), this protein is Dihydroceramide fatty acyl 2-hydroxylase FAH1.